The primary structure comprises 333 residues: Adenosine deaminase (333 aa).

Zn(2+) contacts are provided by His12 and His14. Positions 14, 16, and 170 each coordinate substrate. His197 is a binding site for Zn(2+). Glu200 acts as the Proton donor in catalysis. Asp278 is a binding site for Zn(2+). Asp279 contributes to the substrate binding site.

It belongs to the metallo-dependent hydrolases superfamily. Adenosine and AMP deaminases family. Adenosine deaminase subfamily. It depends on Zn(2+) as a cofactor.

It catalyses the reaction adenosine + H2O + H(+) = inosine + NH4(+). The catalysed reaction is 2'-deoxyadenosine + H2O + H(+) = 2'-deoxyinosine + NH4(+). In terms of biological role, catalyzes the hydrolytic deamination of adenosine and 2-deoxyadenosine. This Escherichia coli O139:H28 (strain E24377A / ETEC) protein is Adenosine deaminase.